Reading from the N-terminus, the 393-residue chain is MSTINVEHTYPAVSSLIADLKSRKVQGPFAVAVETALVMRQVISQTRWSTVDQLIDTVRAVGSTLVKAQPTEFSCGNIIRRILRLIREEYQELLKTADENEKLIVSSSNSSSPSQKRDIPSNEKLVQSHEPVSVQMYSSMLNLLGRPTLESPTHSKTVGDSRVTGGMDMRAVIISGIQDVIDELDKINTDIEVQSMDHLHSNEIILTQGCSKTVEAFLRFAAKKRKFSVIVAEGFPNNQKGSHAMAKRLAQAGIDTTVISDATIFAIMSRVNKVILGTHAILGNGGLVTYSGAQLVAQAARHHATPVVVCSGIYKLSPVYPYDLESIIQLSSPDKIMSFNEGDLISRAEILNPYYDYIPPDLVDLFITNLGGYPPSYLYRIMNDTYDASDTIL.

The interval 105–125 (VSSSNSSSPSQKRDIPSNEKL) is disordered. A phosphoserine mark is found at S106, S108, and S112.

It belongs to the eIF-2B alpha/beta/delta subunits family. As to quaternary structure, component of the translation initiation factor 2B (eIF2B) complex which is a heterodecamer of two sets of five different subunits: alpha, beta, gamma, delta and epsilon. Subunits alpha, beta and delta comprise a regulatory subcomplex and subunits epsilon and gamma comprise a catalytic subcomplex. Within the complex, the hexameric regulatory complex resides at the center, with the two heterodimeric catalytic subcomplexes bound on opposite sides.

It localises to the cytoplasm. Its subcellular location is the cytosol. In terms of biological role, acts as a component of the translation initiation factor 2B (eIF2B) complex, which catalyzes the exchange of GDP for GTP on the eukaryotic initiation factor 2 (eIF2) complex gamma subunit. Its guanine nucleotide exchange factor activity is repressed when bound to eIF2 complex phosphorylated on the alpha subunit, thereby limiting the amount of methionyl-initiator methionine tRNA available to the ribosome and consequently global translation is repressed. The protein is Translation initiation factor eIF2B subunit beta (tif222) of Schizosaccharomyces pombe (strain 972 / ATCC 24843) (Fission yeast).